Here is a 625-residue protein sequence, read N- to C-terminus: Vitamin B12 transporter BtuB (625 aa).

The N-terminal stretch at 1–21 (MTIKKYTLLTALSVTAFSGWA) is a signal peptide. Positions 31–38 (DEMVVTAN) match the TonB box motif. The region spanning 43-157 (PKSSVLAPVD…IGGVINILTG (115 aa)) is the TBDR plug domain. Cyanocob(III)alamin-binding positions include serine 90, asparagine 97, and 115–116 (IT). Positions 160–625 (KPGTTLSAGL…EYYFTGSYNF (466 aa)) constitute a TBDR beta-barrel domain. 3 beta stranded membrane-spanning segments follow: residues 163–170 (TTLSAGLG), 174–183 (YQTYDGSTQQ), and 189–200 (TTVTLAGNYTYS). Aspartate 204, glutamine 217, aspartate 219, and aspartate 221 together coordinate Ca(2+). The next 2 membrane-spanning stretches (beta stranded) occupy residues 223–233 (FMGKMLWAGLE) and 238–254 (EQFN…NRSD). Residues tyrosine 255, aspartate 256, and aspartate 269 each coordinate Ca(2+). Beta stranded transmembrane passes span 271 to 285 (RKLS…LRYK), 287 to 304 (GIYA…KDYN), 317 to 333 (SLDE…NTFQ), 336 to 345 (NGMISAGADW), 363 to 379 (FTQH…QQIS), 381 to 391 (VTLEGAVRSDD), 395 to 410 (FGWH…WEFI), 413 to 427 (YRLI…KAPN), 445 to 454 (ESKQWEGGVE), 460 to 469 (LTWRLSAYRN), 484 to 501 (YFNI…TGSF), 505 to 520 (PLSH…PRNA), 528 to 540 (RRAK…QLDW), and 546 to 561 (DWSV…YDKD). Serine 317 provides a ligand contact to cyanocob(III)alamin. Arginine 528 is a cyanocob(III)alamin binding site. Tyrosine 562 provides a ligand contact to cyanocob(III)alamin. Beta stranded transmembrane passes span 569–583 (TVEL…LAVS), 596–607 (IANLFDKDYEMV), and 613–625 (PGRE…SYNF). Residues 608 to 625 (YGYQTPGREYYFTGSYNF) carry the TonB C-terminal box motif.

The protein belongs to the TonB-dependent receptor family. BtuB (TC 1.B.14.3.1) subfamily.

It is found in the cell outer membrane. Its function is as follows. Involved in the active translocation of vitamin B12 (cyanocobalamin) across the outer membrane to the periplasmic space. It derives its energy for transport by interacting with the trans-periplasmic membrane protein TonB. The sequence is that of Vitamin B12 transporter BtuB from Yersinia pestis bv. Antiqua (strain Antiqua).